We begin with the raw amino-acid sequence, 1220 residues long: MGKKQKNKSEDSTKDDIDLDALAAEIEGAGAAKEQEPQKSKGKKKKEKKKQDFDEDDILKELEELSLEAQGIKADRETVAVKPTENNEEEFTSKDKKKKGQKGKKQSFDDNDSEELEDKDSKSKKTAKPKVEMYSGSDDDDDFNKLPKKAKGKAQKSNKKWDGSEEDEDNSKKIKERSRVNSSGESGDESDEFLQSRKGQKKNQKNKPGPNIESGNEDDDSSFKIKTVAQKKAEKKERERKKRDEEKAKLRKLKEKEESETGKKDQSKQKESQRKSEEETVKSKVTLDTGVIPASEEKAETPTAAEDDNEGDKKKKDKKKKKGEKEEKEKEKKKGPSKATVKAMQEALAKLKEEEERQKREEEERIKRLEELEAKRKEEERLEQEKRERKKQKEKERKERLKKEGKLLTKSQREARARAEATLKLLQAQGVEVPSKDSLPKKRPIYEDKKRKKIPQQLESKEVSESMELCAAVEVMEQGVPEKEETPPPVEPEEEEDTEDAGLDDWEAMASDEETEKVEGNTVHIEVKENPEEEEEEEEEEEEDEESEEEEEEEGESEGSEGDEEDEKVSDEKDSGKTLDKKPSKEMSSDSEYDSDDDRTKEERAYDKAKRRIEKRRLEHSKNVNTEKLRAPIICVLGHVDTGKTKILDKLRHTHVQDGEAGGITQQIGATNVPLEAINEQTKMIKNFGRENVRIPGMLIIDTPGHESFSNLRNRGSSLCDIAILVVDIMHGGEPQKMKPTNLPKPKKCPFMVALNKIDRLYDWKKSPDSDVAATLKKQKKNTKDEFEERAKAIIVEFAQQGLNAALFYENKDPRTFVSLVPTSAHTGDGMGSLIYLLVELTQTMLSKRLAHCEELRAQVMEVKALPGMGTTIDVILINGRLKEGDTIIVPGVEGPIVTQIRGLLLPPPMKELRVKNQYEKHKEVEAAQGVKILGKDLEKTLAGLPLLVAYKEDEIPVLKDELIHELKQTLNAIKLEEKGVYVQASTLGSLEALLEFLKTSEVPYAGINIGPVHKKDVMKASVMLEHDPQYAVILAFDVRIERDAQEMADSLGVRIFSAEIIYHLFDAFTKYRQDYKKQKQEKFKHIAVFPCKMKILPQYIFNSRDPIVMGVTVEAGQVKQGTPMCVPSKNFVDIGIVTSIEINHKQVDVAKKGQEVCVKIEPIPGESPKMFGRHFEATDILVSKISRQSIDALKDWFRDEMQKSDWQLIVELKKVFEII.

2 disordered regions span residues Met-1–Ala-417 and Gly-430–Lys-608. The segment covering Asn-7–Asp-16 has biased composition (basic and acidic residues). Over residues Asp-20–Ala-32 the composition is skewed to low complexity. Residue Ser-66 is modified to Phosphoserine. Basic residues predominate over residues Asp-95–Lys-105. Residues Ser-107 and Ser-113 each carry the phosphoserine modification. The segment covering Asp-109–Asp-118 has biased composition (acidic residues). At Tyr-134 the chain carries Phosphotyrosine. Phosphoserine is present on residues Ser-135 and Ser-137. A compositionally biased stretch (basic residues) spans Leu-146–Asn-158. Phosphoserine is present on residues Ser-164, Ser-171, Ser-182, Ser-183, Ser-186, Ser-190, Ser-214, and Ser-222. Residues Asn-170 to Arg-179 show a composition bias toward basic and acidic residues. Positions Lys-231–Lys-282 are enriched in basic and acidic residues. At Thr-301 the chain carries Phosphothreonine. 3 stretches are compositionally biased toward basic and acidic residues: residues Gly-323–Lys-334, Ala-349–Ala-417, and Pro-434–Lys-449. Residue Ser-438 is modified to Phosphoserine. 2 stretches are compositionally biased toward acidic residues: residues Glu-491–Glu-516 and Pro-531–Val-569. Thr-498 carries the post-translational modification Phosphothreonine. Phosphoserine is present on residues Ser-547, Ser-557, Ser-560, Ser-588, Ser-589, Ser-591, and Ser-595. Residues Ser-570–Ser-588 show a composition bias toward basic and acidic residues. Residues Asp-598–Lys-608 show a composition bias toward basic and acidic residues. The region spanning Leu-629–Leu-846 is the tr-type G domain. Residues Gly-638–Thr-645 are G1. GTP-binding positions include Val-640–Lys-646 and Gly-663–Thr-665. A G2 region spans residues Gly-663 to Gln-667. The tract at residues Asp-702 to Gly-705 is G3. His-706 is a catalytic residue. GTP is bound by residues Asn-756 to Lys-757, Asp-759 to Arg-760, and Ala-825 to His-826. The segment at Asn-756–Asp-759 is G4. Residues Ser-824–His-826 are G5. Ser-1168 is subject to Phosphoserine.

This sequence belongs to the TRAFAC class translation factor GTPase superfamily. Classic translation factor GTPase family. IF-2 subfamily. In terms of assembly, interacts through its C-terminal domain (CTD) with the CTD of eIF1A (EIF1AX) or with the CTD of EIF5 (mutually exclusive) through a common binding site. Interacts with eIF1A (EIF1AX) from the location of the start codon by the 43S complex until the formation of the 80S complex. Interacts with ANXA5 in a calcium and phospholipid-dependent manner. A monovalent cation is required as a cofactor.

It localises to the cytoplasm. The enzyme catalyses GTP + H2O = GDP + phosphate + H(+). Plays a role in translation initiation. Ribosome-dependent GTPase that promotes the joining of the 60S ribosomal subunit to the pre-initiation complex to form the 80S initiation complex with the initiator methionine-tRNA in the P-site base paired to the start codon. Together with eIF1A (EIF1AX), actively orients the initiator methionine-tRNA in a conformation that allows 60S ribosomal subunit joining to form the 80S initiation complex. Is released after formation of the 80S initiation complex. Its GTPase activity is not essential for ribosomal subunits joining, but GTP hydrolysis is needed for eIF1A (EIF1AX) ejection quickly followed by EIF5B release to form elongation-competent ribosomes. In contrast to its procaryotic homolog, does not promote recruitment of Met-rRNA to the small ribosomal subunit. This Pongo abelii (Sumatran orangutan) protein is Eukaryotic translation initiation factor 5B (EIF5B).